The chain runs to 96 residues: MAAKNSEMKFAIFFVVLLTTTLVDMSGISKMQVMALRDIPPQETLLKMKLLPTNILGLCNEPCSSNSDCIGITLCQFCKEKTDQYGLTYRTCNLLP.

3 cysteine pairs are disulfide-bonded: Cys-59–Cys-75, Cys-63–Cys-78, and Cys-69–Cys-92.

As to expression, fruit specific.

The polypeptide is Fruit-specific protein (2A11) (Solanum lycopersicum (Tomato)).